The chain runs to 138 residues: ATP synthase epsilon chain (138 aa).

This sequence belongs to the ATPase epsilon chain family. In terms of assembly, F-type ATPases have 2 components, CF(1) - the catalytic core - and CF(0) - the membrane proton channel. CF(1) has five subunits: alpha(3), beta(3), gamma(1), delta(1), epsilon(1). CF(0) has three main subunits: a, b and c.

The protein resides in the cell inner membrane. Produces ATP from ADP in the presence of a proton gradient across the membrane. The sequence is that of ATP synthase epsilon chain from Geobacter sulfurreducens (strain ATCC 51573 / DSM 12127 / PCA).